The sequence spans 249 residues: Large ribosomal subunit protein uL16m (249 aa).

The protein belongs to the universal ribosomal protein uL16 family. In terms of assembly, component of the mitochondrial large ribosomal subunit (mt-LSU). Mature N.crassa 74S mitochondrial ribosomes consist of a small (37S) and a large (54S) subunit. The 37S small subunit contains a 16S ribosomal RNA (16S mt-rRNA) and 32 different proteins. The 54S large subunit contains a 23S rRNA (23S mt-rRNA) and 42 different proteins.

It localises to the mitochondrion. Its function is as follows. Component of the mitochondrial ribosome (mitoribosome), a dedicated translation machinery responsible for the synthesis of mitochondrial genome-encoded proteins, including at least some of the essential transmembrane subunits of the mitochondrial respiratory chain. The mitoribosomes are attached to the mitochondrial inner membrane and translation products are cotranslationally integrated into the membrane. In Neurospora crassa (strain ATCC 24698 / 74-OR23-1A / CBS 708.71 / DSM 1257 / FGSC 987), this protein is Large ribosomal subunit protein uL16m (mrpl16).